The chain runs to 97 residues: uncharacterized protein (97 aa).

Helical transmembrane passes span 7–27 (CIAP…IGLG), 34–54 (IPML…LMFS), and 69–89 (IVLY…PTIL).

It is found in the cell membrane. This is an uncharacterized protein from Haemophilus influenzae (strain ATCC 51907 / DSM 11121 / KW20 / Rd).